Consider the following 153-residue polypeptide: MPPPVLALVSGQALPAFLLCSTLLVIKMYVVAVITGQVRLRKKAFANPEDALRHGGLQYCRSDQDVDRCLRAHRNDMETIYPFLFLGFVYSFLGPDPFIAQMHFLVFFLGRMVHTVAYLGKLRAPTRSLAYTVAQLPCASMALQIVWEAACHL.

Residues 1-13 (MPPPVLALVSGQA) are Lumenal-facing. The helical transmembrane segment at 14–42 (LPAFLLCSTLLVIKMYVVAVITGQVRLRK) threads the bilayer. A glutathione-binding site is contributed by arginine 39. Over 43-61 (KAFANPEDALRHGGLQYCR) the chain is Cytoplasmic. Residues 62–91 (SDQDVDRCLRAHRNDMETIYPFLFLGFVYS) form a helical membrane-spanning segment. Residue 74–78 (RNDME) participates in glutathione binding. Over 92–96 (FLGPD) the chain is Lumenal. The helical transmembrane segment at 97 to 120 (PFIAQMHFLVFFLGRMVHTVAYLG) threads the bilayer. Glutathione-binding residues include histidine 114 and tyrosine 118. Residues 121–124 (KLRA) lie on the Cytoplasmic side of the membrane. A helical membrane pass occupies residues 125-153 (PTRSLAYTVAQLPCASMALQIVWEAACHL). Residue 127 to 131 (RSLAY) participates in glutathione binding.

This sequence belongs to the MAPEG family. Homotrimer. It depends on glutathione as a cofactor.

It is found in the membrane. The protein resides in the cytoplasm. Its subcellular location is the perinuclear region. It catalyses the reaction prostaglandin H2 = prostaglandin E2. The catalysed reaction is 2-glyceryl-prostaglandin H2 = 2-glyceryl-prostaglandin E2. The enzyme catalyses prostaglandin G2 = (15S)-15-hydroperoxy-prostaglandin E2. It carries out the reaction 1-chloro-2,4-dinitrobenzene + glutathione = 2,4-dinitrophenyl-S-glutathione + chloride + H(+). It catalyses the reaction (5S)-hydroperoxy-(6E,8Z,11Z,14Z)-eicosatetraenoate + 2 glutathione = (5S)-hydroxy-(6E,8Z,11Z,14Z)-eicosatetraenoate + glutathione disulfide + H2O. Its pathway is lipid metabolism; prostaglandin biosynthesis. Functionally, terminal enzyme of the cyclooxygenase (COX)-2-mediated prostaglandin E2 (PGE2) biosynthetic pathway. Catalyzes the glutathione-dependent oxidoreduction of prostaglandin endoperoxide H2 (PGH2) to prostaglandin E2 (PGE2) in response to inflammatory stimuli. Plays a key role in inflammation response, fever and pain. Also catalyzes the oxidoreduction of endocannabinoids into prostaglandin glycerol esters and PGG2 into 15-hydroperoxy-PGE2. In addition, displays low glutathione transferase and glutathione-dependent peroxidase activities, toward 1-chloro-2,4-dinitrobenzene and 5-hydroperoxyicosatetraenoic acid (5-HPETE), respectively. This is Prostaglandin E synthase (PTGES) from Canis lupus familiaris (Dog).